Here is a 504-residue protein sequence, read N- to C-terminus: Histidine ammonia-lyase (504 aa).

The 5-imidazolinone (Ala-Gly) cross-link spans 142-144; sequence ASG. Position 143 is a 2,3-didehydroalanine (Ser) (Ser143).

This sequence belongs to the PAL/histidase family. Post-translationally, contains an active site 4-methylidene-imidazol-5-one (MIO), which is formed autocatalytically by cyclization and dehydration of residues Ala-Ser-Gly.

It is found in the cytoplasm. It catalyses the reaction L-histidine = trans-urocanate + NH4(+). It functions in the pathway amino-acid degradation; L-histidine degradation into L-glutamate; N-formimidoyl-L-glutamate from L-histidine: step 1/3. This Staphylococcus aureus (strain JH1) protein is Histidine ammonia-lyase.